The chain runs to 503 residues: Maturase K (503 aa).

It belongs to the intron maturase 2 family. MatK subfamily.

Its subcellular location is the plastid. It is found in the chloroplast. Functionally, usually encoded in the trnK tRNA gene intron. Probably assists in splicing its own and other chloroplast group II introns. The chain is Maturase K from Backhousia myrtifolia (Grey myrtle).